The primary structure comprises 177 residues: Large ribosomal subunit protein uL6 (177 aa).

This sequence belongs to the universal ribosomal protein uL6 family. Part of the 50S ribosomal subunit.

This protein binds to the 23S rRNA, and is important in its secondary structure. It is located near the subunit interface in the base of the L7/L12 stalk, and near the tRNA binding site of the peptidyltransferase center. The sequence is that of Large ribosomal subunit protein uL6 from Methylibium petroleiphilum (strain ATCC BAA-1232 / LMG 22953 / PM1).